We begin with the raw amino-acid sequence, 238 residues long: Ribonuclease PH (238 aa).

Phosphate-binding positions include Arg-86 and 124–126 (GTR).

This sequence belongs to the RNase PH family. In terms of assembly, homohexameric ring arranged as a trimer of dimers.

The catalysed reaction is tRNA(n+1) + phosphate = tRNA(n) + a ribonucleoside 5'-diphosphate. Phosphorolytic 3'-5' exoribonuclease that plays an important role in tRNA 3'-end maturation. Removes nucleotide residues following the 3'-CCA terminus of tRNAs; can also add nucleotides to the ends of RNA molecules by using nucleoside diphosphates as substrates, but this may not be physiologically important. Probably plays a role in initiation of 16S rRNA degradation (leading to ribosome degradation) during starvation. This is Ribonuclease PH from Mesorhizobium japonicum (strain LMG 29417 / CECT 9101 / MAFF 303099) (Mesorhizobium loti (strain MAFF 303099)).